The sequence spans 279 residues: Cholesterol 25-hydroxylase-like protein 2 (279 aa).

2 N-linked (GlcNAc...) asparagine glycosylation sites follow: Asn-6 and Asn-13. The next 3 membrane-spanning stretches occupy residues 36–56, 86–106, and 120–140; these read LFPVILSVSMYLVLVFFYTVL, LALTTYNHLLYIFPAAVAQWL, and LTAFLLGIVGCTVVFDFQYYL. The Fatty acid hydroxylase domain occupies 128 to 262; sequence VGCTVVFDFQ…FAHWDWLGGT (135 aa). The Histidine box-1 motif lies at 141 to 145; sequence WHLLH. A Histidine box-2 motif is present at residues 156–160; sequence HALHH. A run of 2 transmembrane segments spans residues 165 to 185 and 189 to 209; these read TFSLVTQYLSAWELFSVGFWT and PLLLQCHCLTAWAFMLFNIWV. Residues 237–243 carry the Histidine box-3 motif; that stretch reads RHDAHHQ.

The protein belongs to the sterol desaturase family. The cofactor is Fe cation.

The protein localises to the endoplasmic reticulum membrane. Its function is as follows. May catalyze the formation of 25-hydroxycholesterol from cholesterol. The chain is Cholesterol 25-hydroxylase-like protein 2 from Danio rerio (Zebrafish).